Reading from the N-terminus, the 398-residue chain is Inner membrane protein YjgN (398 aa).

Topologically, residues 1–24 are cytoplasmic; sequence MAQVINEMDVPSHSFVFHGTGERY. A helical transmembrane segment spans residues 25–45; sequence FLICVVNVLLTIITLGIYLPW. Topologically, residues 46 to 73 are periplasmic; that stretch reads ALMKCKRYLYANMEVNGQRFSYGITGGN. A helical transmembrane segment spans residues 74 to 94; sequence VFVSCLFFVFFYFAILMTVSA. Aspartate 95 is a topological domain (cytoplasmic). A helical membrane pass occupies residues 96–116; that stretch reads MPLVGCVLTLLLLVLLIFMAA. Residues 117 to 142 are Periplasmic-facing; sequence KGLRHQALMTSLNGVRFSFNCSMKGF. Residues 143–163 form a helical membrane-spanning segment; it reads WWVTFFLPILMAIGMGTVFFI. Residues 164-175 are Cytoplasmic-facing; sequence STKMLPANSSSS. Residues 176 to 196 traverse the membrane as a helical segment; the sequence is VIISMVLMAIVGIVSIGIFNG. The Periplasmic portion of the chain corresponds to 197 to 228; that stretch reads TLYSLVMSFLWSNTSFGIHRFKVKLDTTYCIK. Residues 229-249 traverse the membrane as a helical segment; the sequence is YAILAFLALLPFLAVAGYIIF. At 250 to 278 the chain is on the cytoplasmic side; the sequence is DQILNAYDSSVYANDDIENLQQFMEMQRK. A helical membrane pass occupies residues 279–299; it reads MIIAQLIYYFGIAVSTSYLTV. Over 300-333 the chain is Periplasmic; that stretch reads SLRNHFMSNLSLNDGRIRFRLTLTYHGMLYRMCA. Residues 334 to 354 traverse the membrane as a helical segment; the sequence is LVVISGITGGLAYPLLKIWMI. Topologically, residues 355 to 398 are cytoplasmic; it reads DWQAKNTYLLGDLDDLPLINKEEQPDKGFLASISRGVMPSLPFL.

It is found in the cell inner membrane. The sequence is that of Inner membrane protein YjgN (yjgN) from Escherichia coli (strain K12).